Reading from the N-terminus, the 571-residue chain is Proline--tRNA ligase (571 aa).

This sequence belongs to the class-II aminoacyl-tRNA synthetase family. ProS type 1 subfamily. Homodimer.

It is found in the cytoplasm. It carries out the reaction tRNA(Pro) + L-proline + ATP = L-prolyl-tRNA(Pro) + AMP + diphosphate. Its function is as follows. Catalyzes the attachment of proline to tRNA(Pro) in a two-step reaction: proline is first activated by ATP to form Pro-AMP and then transferred to the acceptor end of tRNA(Pro). As ProRS can inadvertently accommodate and process non-cognate amino acids such as alanine and cysteine, to avoid such errors it has two additional distinct editing activities against alanine. One activity is designated as 'pretransfer' editing and involves the tRNA(Pro)-independent hydrolysis of activated Ala-AMP. The other activity is designated 'posttransfer' editing and involves deacylation of mischarged Ala-tRNA(Pro). The misacylated Cys-tRNA(Pro) is not edited by ProRS. The polypeptide is Proline--tRNA ligase (Aliivibrio salmonicida (strain LFI1238) (Vibrio salmonicida (strain LFI1238))).